The primary structure comprises 491 residues: Aspartyl/glutamyl-tRNA(Asn/Gln) amidotransferase subunit B (491 aa).

This sequence belongs to the GatB/GatE family. GatB subfamily. Heterotrimer of A, B and C subunits.

It catalyses the reaction L-glutamyl-tRNA(Gln) + L-glutamine + ATP + H2O = L-glutaminyl-tRNA(Gln) + L-glutamate + ADP + phosphate + H(+). It carries out the reaction L-aspartyl-tRNA(Asn) + L-glutamine + ATP + H2O = L-asparaginyl-tRNA(Asn) + L-glutamate + ADP + phosphate + 2 H(+). Its function is as follows. Allows the formation of correctly charged Asn-tRNA(Asn) or Gln-tRNA(Gln) through the transamidation of misacylated Asp-tRNA(Asn) or Glu-tRNA(Gln) in organisms which lack either or both of asparaginyl-tRNA or glutaminyl-tRNA synthetases. The reaction takes place in the presence of glutamine and ATP through an activated phospho-Asp-tRNA(Asn) or phospho-Glu-tRNA(Gln). The sequence is that of Aspartyl/glutamyl-tRNA(Asn/Gln) amidotransferase subunit B from Burkholderia cenocepacia (strain ATCC BAA-245 / DSM 16553 / LMG 16656 / NCTC 13227 / J2315 / CF5610) (Burkholderia cepacia (strain J2315)).